The sequence spans 308 residues: MGEIKVSPDYNWFRSTVPLKKIIVDDDDSKIWSLYDAGPRSIRCPLIFLPPVSGTADVFFQQILALTGWGYRVIALQYPVYWDHLEFCDGFRKLLDHLQLDKVHLFGASLGGFLAQKFAEYTHKSPRVHSLILCNAFSDTSIFNQTWTANSFWLMPAFMLKKIVLGNFSSGPVDPMMADAIDFMVDRLESLGQSELASRLTLNCQNSYVEPHKIRDIPVTIMDVFDQSALSTEAKEEMYKLYPNARRAHLKTGGNFPYLCRSAEVNLYVQIHLLQFHGTKYAAIDPSVVSAEELEVQKGRLGLSQEEP.

In terms of domain architecture, AB hydrolase-1 spans 87-159; sequence FCDGFRKLLD…NSFWLMPAFM (73 aa). Position 304 is a phosphoserine (serine 304).

It belongs to the AB hydrolase superfamily. As to quaternary structure, interacts with CD4. Interacts with ALDH16A1. In terms of tissue distribution, expressed in cell lines FT.1 and in a L cell fibroblast derivative (at protein level).

The protein localises to the cytoplasm. Its function is as follows. May play a role as a negative regulatory factor in CD4-dependent T-cell activation. This chain is Maspardin (Spg21), found in Mus musculus (Mouse).